The following is a 115-amino-acid chain: Holo-[acyl-carrier-protein] synthase (115 aa).

Mg(2+) is bound by residues aspartate 8 and glutamate 50.

It belongs to the P-Pant transferase superfamily. AcpS family. It depends on Mg(2+) as a cofactor.

The protein resides in the cytoplasm. The enzyme catalyses apo-[ACP] + CoA = holo-[ACP] + adenosine 3',5'-bisphosphate + H(+). Transfers the 4'-phosphopantetheine moiety from coenzyme A to a Ser of acyl-carrier-protein. This chain is Holo-[acyl-carrier-protein] synthase, found in Arthrobacter sp. (strain FB24).